The sequence spans 335 residues: UPF0353 protein MAV335 (335 aa).

A run of 2 helical transmembrane segments spans residues 18-38 (WFFL…LMQL) and 67-87 (LPAI…AGPT). The region spanning 98–295 (VVMLVIDVSQ…QELKSVYATL (198 aa)) is the VWFA domain. Residues 309–329 (SVGWVRLGALVLRLAADALLI) form a helical membrane-spanning segment.

Belongs to the UPF0353 family.

It is found in the cell membrane. This chain is UPF0353 protein MAV335, found in Mycobacterium avium.